We begin with the raw amino-acid sequence, 366 residues long: MLKTISGTLALSLIIAASVHQAQAATTYNAVVSKSSSDGKTFKTIADAIASAPAGSTPFVILIKNGVYNERLTITRNNLHLKGESRNGAVIAAATAAGTLKSDGSKWGTAGSSTITISAKDFSAQSLTIRNDFDFPANQAKSDSDSSKIKDTQAVALYVTKSGDRAYFKDVSLVGYQDTLYVSGGRSFFSDCRISGTVDFIFGDGTALFNNCDLVSRYRADVKSGNVSGYLTAPSTNINQKYGLVITNSRVIRESDSVPAKSYGLGRPWHPTTTFSDGRYADPNAIGQTVFLNTSMDNHIYGWDKMSGKDKNGNTIWFNPEDSRFFEYKSYGAGATVSKDRRQLTDAQAAEYTQSKVLGDWTPTLP.

The signal sequence occupies residues 1-24; the sequence is MLKTISGTLALSLIIAASVHQAQA. Residues threonine 109 and glutamine 153 each contribute to the substrate site. The active-site Proton donor is aspartate 178. A disulfide bridge connects residues cysteine 192 and cysteine 212. Aspartate 199 acts as the Nucleophile in catalysis. Positions 219, 226, 230, 267, 269, and 272 each coordinate substrate.

It belongs to the pectinesterase family. Monomer.

The protein localises to the secreted. The catalysed reaction is [(1-&gt;4)-alpha-D-galacturonosyl methyl ester](n) + n H2O = [(1-&gt;4)-alpha-D-galacturonosyl](n) + n methanol + n H(+). It participates in glycan metabolism; pectin degradation; 2-dehydro-3-deoxy-D-gluconate from pectin: step 1/5. In terms of biological role, catalyzes the first step in maceration and soft-rotting of plant tissue. The sequence is that of Pectinesterase A from Dickeya dadantii (strain 3937) (Erwinia chrysanthemi (strain 3937)).